The chain runs to 452 residues: Imidazoleglycerol-phosphate dehydratase (452 aa).

Residues 1–233 are unknown activity; that stretch reads MASPVQALLL…VGASVVLTPG (233 aa). An imidazoleglycerol-phosphate dehydratase region spans residues 234-452; it reads LGELLDLVPA…GVPSTKGVLA (219 aa).

This sequence belongs to the imidazoleglycerol-phosphate dehydratase family.

The enzyme catalyses D-erythro-1-(imidazol-4-yl)glycerol 3-phosphate = 3-(imidazol-4-yl)-2-oxopropyl phosphate + H2O. It participates in amino-acid biosynthesis; L-histidine biosynthesis; L-histidine from 5-phospho-alpha-D-ribose 1-diphosphate: step 6/9. This chain is Imidazoleglycerol-phosphate dehydratase (HIS3), found in Phytophthora nicotianae (Potato buckeye rot agent).